A 1426-amino-acid polypeptide reads, in one-letter code: Epidermal growth factor receptor (1426 aa).

Positions 1-30 (MLLRRRNGPCPFPLLLLLLAHCICIWPASA) are cleaved as a signal peptide. Over 31 to 868 (ARDRYARQNN…SKITANLDVN (838 aa)) the chain is Extracellular. N-linked (GlcNAc...) asparagine glycans are attached at residues N128, N241, N419, N443, N482, N569, N599, N617, N816, N823, and N828. The chain crosses the membrane as a helical span at residues 869-889 (MIFIITGAVLVPTICILCVVT). Topologically, residues 890–1426 (YICRQKQKAK…HRNRNTETRV (537 aa)) are cytoplasmic. T902 bears the Phosphothreonine; by PKC mark. In terms of domain architecture, Protein kinase spans 938–1198 (LRKGGVLGMG…QLTTVFAEFA (261 aa)). ATP-binding positions include 944–952 (LGMGAFGRV) and K971. Residue D1063 is the Proton acceptor of the active site. Residues 1232-1297 (PTTDGSEAIA…DSSAREVGVG (66 aa)) form a disordered region. The segment covering 1257–1276 (HRTDCTDEMPKLNRYCKDPS) has biased composition (basic and acidic residues). Y1310 is modified (phosphotyrosine; by autocatalysis).

The protein belongs to the protein kinase superfamily. Tyr protein kinase family. EGF receptor subfamily. In terms of assembly, homodimer. Binding of the ligand spitz triggers homodimerization of the receptor however, it is able to form dimers, albeit weakly, in the absence of spitz. Interacts (when phosphorylated on tyrosine residues) with Vav (via SH2 domain). Interacts (when ubiquitinated) with Graf. May interact (when phosphorylated) with EGFRAP (via SH2 domain). Ubiquitination by Cbl in response to high spi, promotes its interaction with Graf and thus facilitates its GPI-enriched endocytic compartment (GEEC) mediated endocytosis and its subsequent degradation. In terms of tissue distribution, ubiquitously expressed in embryos. In larvae, uniform expression is seen in wing disks, genital disk, anlagen of testis and ovary, and brain cortex. In eye-antenna disk, highest expression is anterior to morphogenetic furrow, levels remain high in photoreceptor precursor cells. This pattern is reversed in posterior eye disk. In adults expression is high in brain cortex and thoracic and abdominal ganglia.

It localises to the membrane. The enzyme catalyses L-tyrosyl-[protein] + ATP = O-phospho-L-tyrosyl-[protein] + ADP + H(+). Receptor tyrosine kinase, binding ligands of the EGF family and activating several signaling cascades to convert extracellular cues into appropriate cellular responses. Known ligands include spitz, gurken, vein and giant-lens. Transduces the signal through the ras-raf-MAPK pathway. Critical for the proliferation of imaginal tissues, and for the determination of both the antero-posterior and dorso-ventral polarities of the oocyte. In the embryo, plays a role in the establishment of ventral cell fates, maintenance of amnioserosa and ventral neuroectodermal cells, germ band retraction, cell fate specification in the central nervous system, and production and repair of the cuticle. During dorsal closure (DC) functions with the dpp- and ACK-signaling pathways to regulate expression of the myosin zip in the embryonic epidermis and amnioserosa (AS), and thus coordinate the progression of epidermal cell shape changes required for correct DC. In the embryonic epidermis, functions by negatively regulating dpp and consequently the dpp-dependent expression of the myosin zip. In the AS, negatively regulates the production/ and or secretion of a diffusible signal which, is produced by the ACK-signaling pathway, and acts in the AS and epidermal cells to promote zip expression. Also required in the AS to inhibit or delay apoptosis, and consequently slow the rate of DC. Therefore functions at multiple levels to negatively regulate morphogenesis during DC, suggesting that it acts as a general brake mechanism for adjusting the rate of dorsal closure to ensure that closure proceeds smoothly and without loss of epidermal integrity. During oogenesis, one of two tyrosine kinase chemoattractant receptors (Egfr and Pvr), that function in the border cells (BC) to detect guidance cues from the oocyte and transduce this information to the guidance pathway that regulate the collective migration of the BC cluster through the nurse cells to the oocyte. The chain is Epidermal growth factor receptor (Egfr) from Drosophila melanogaster (Fruit fly).